A 1178-amino-acid polypeptide reads, in one-letter code: Ubiquitin carboxyl-terminal hydrolase cyk-3 (1178 aa).

EF-hand domains lie at 28–60 (EEYRRIRQAFQRFKNGCINYDEFCYHVLGGAQI), 175–210 (FPDSYAERLFAVFDENRDGQIDFRELVCTLSALCRG), and 211–246 (PLPGRISQLARIWDVDCDKLLSDEELSNMYKDLNVP). Residues Asp-188, Asn-190, Asp-192, Gln-194, Glu-199, Asp-224, Asp-226, Asp-228, and Glu-235 each contribute to the Ca(2+) site. One can recognise a DUSP domain in the interval 296–410 (ESRKMELQIV…VDSQFTRKYL (115 aa)). Residues 570 to 1175 (VGLVNYGNFC…GAYLLFYERK (606 aa)) enclose the USP domain. Cys-579 (nucleophile) is an active-site residue. Residues 681–725 (SNKSLHPSPEESEGTDSNKLSDSSKKKEADKEEADEEKAERSWTE) form a disordered region. His-1134 (proton acceptor) is an active-site residue.

This sequence belongs to the peptidase C19 family. In terms of tissue distribution, expressed in excretory cells, coelomocytes, head neurons, hypodermal cells, germ cells, oocytes, sperm and pharynx (at protein level).

The protein localises to the nucleus. It localises to the cytoplasm. It is found in the cytoskeleton. The protein resides in the microtubule organizing center. The enzyme catalyses Thiol-dependent hydrolysis of ester, thioester, amide, peptide and isopeptide bonds formed by the C-terminal Gly of ubiquitin (a 76-residue protein attached to proteins as an intracellular targeting signal).. Its function is as follows. Ubiquitin-protein hydrolase which cleaves ubiquitin from ubiquitinated proteins. Plays a role in embryo osmoregulation. Probably by regulating osmosis, controls actin redistribution in the 1-cell embryos and thus actin-dependent processes such as cytokinesis and P-granules segregation. During the first embryonic mitotic division, involved in the formation of a functional microtubule organizing center provided by the male pronucleus. Acts as a positive regulator of the mTORC1 signaling. In Caenorhabditis elegans, this protein is Ubiquitin carboxyl-terminal hydrolase cyk-3.